The sequence spans 125 residues: Class III hydrophobin G (125 aa).

Positions 1 to 20 are cleaved as a signal peptide; sequence MKPSIVTFLMLAAVTAAVSA. Disulfide bonds link cysteine 54/cysteine 107, cysteine 60/cysteine 101, cysteine 61/cysteine 94, and cysteine 108/cysteine 122.

Belongs to the fungal hydrophobin family. Self-assembles to form functional amyloid fibrils called rodlets. Self-assembly into fibrillar rodlets occurs spontaneously at hydrophobic:hydrophilic interfaces and the rodlets further associate laterally to form amphipathic monolayers.

It localises to the secreted. The protein localises to the cell wall. Its function is as follows. Aerial growth, conidiation, and dispersal of filamentous fungi in the environment rely upon a capability of their secreting small amphipathic proteins called hydrophobins (HPBs) with low sequence identity. Class I can self-assemble into an outermost layer of rodlet bundles on aerial cell surfaces, conferring cellular hydrophobicity that supports fungal growth, development and dispersal; whereas Class II form highly ordered films at water-air interfaces through intermolecular interactions but contribute nothing to the rodlet structure. RodF and rodG belong to Class III, which contains hydrophobins with intermediate (between classes I and II) or atypical characteristics. RodG, unlike rodA, is not required for rodlet formation. The protein is Class III hydrophobin G of Aspergillus fumigatus (strain ATCC MYA-4609 / CBS 101355 / FGSC A1100 / Af293) (Neosartorya fumigata).